We begin with the raw amino-acid sequence, 320 residues long: Malate dehydrogenase (320 aa).

NAD(+)-binding positions include 10–15 and Asp-34; that span reads GSGMIG. Residues Arg-83 and Arg-89 each coordinate substrate. Residues Asn-96 and 119–121 contribute to the NAD(+) site; that span reads ITN. Positions 121 and 152 each coordinate substrate. His-176 (proton acceptor) is an active-site residue.

Belongs to the LDH/MDH superfamily. MDH type 3 family.

It catalyses the reaction (S)-malate + NAD(+) = oxaloacetate + NADH + H(+). Its function is as follows. Catalyzes the reversible oxidation of malate to oxaloacetate. This chain is Malate dehydrogenase, found in Agrobacterium fabrum (strain C58 / ATCC 33970) (Agrobacterium tumefaciens (strain C58)).